The primary structure comprises 627 residues: Chaperone protein DnaK (627 aa).

Position 197 is a phosphothreonine; by autocatalysis (Thr-197). Residues 596–615 (MYAQGGDQGQQAAPQQEQSG) are compositionally biased toward low complexity. Residues 596-627 (MYAQGGDQGQQAAPQQEQSGDNVEDVEFEEVK) are disordered. Acidic residues predominate over residues 617–627 (NVEDVEFEEVK).

It belongs to the heat shock protein 70 family.

Functionally, acts as a chaperone. This is Chaperone protein DnaK from Flavobacterium johnsoniae (strain ATCC 17061 / DSM 2064 / JCM 8514 / BCRC 14874 / CCUG 350202 / NBRC 14942 / NCIMB 11054 / UW101) (Cytophaga johnsonae).